Reading from the N-terminus, the 189-residue chain is Ras-like protein 1 (189 aa).

10 to 17 (GAGGVGKS) contacts GTP. The Effector region signature appears at 32–40 (YDPTIEDSY). Residues 57–61 (DTAGQ) and 116–119 (NKCD) contribute to the GTP site. Residue Cys-186 is modified to Cysteine methyl ester. The S-geranylgeranyl cysteine moiety is linked to residue Cys-186. A propeptide spans 187 to 189 (KML) (removed in mature form).

This sequence belongs to the small GTPase superfamily. Ras family.

It localises to the cell membrane. It carries out the reaction GTP + H2O = GDP + phosphate + H(+). With respect to regulation, alternates between an inactive form bound to GDP and an active form bound to GTP. Activated by a guanine nucleotide-exchange factor (GEF) and inactivated by a GTPase-activating protein (GAP). In terms of biological role, ras proteins bind GDP/GTP and possess intrinsic GTPase activity. Plays a role in eye development by regulating cell growth, survival of postmitotic ommatidial cells and differentiation of photoreceptor cells. During larval development, mediates Ptth/tor signaling leading to the production of ecdysone, a hormone required for the initiation of metamorphosis. The chain is Ras-like protein 1 from Drosophila willistoni (Fruit fly).